Here is a 591-residue protein sequence, read N- to C-terminus: Isocitrate dehydrogenase kinase/phosphatase (591 aa).

ATP-binding positions include Ala315 to Met321 and Lys336. Asp371 is an active-site residue.

Belongs to the AceK family.

It localises to the cytoplasm. The catalysed reaction is L-seryl-[isocitrate dehydrogenase] + ATP = O-phospho-L-seryl-[isocitrate dehydrogenase] + ADP + H(+). In terms of biological role, bifunctional enzyme which can phosphorylate or dephosphorylate isocitrate dehydrogenase (IDH) on a specific serine residue. This is a regulatory mechanism which enables bacteria to bypass the Krebs cycle via the glyoxylate shunt in response to the source of carbon. When bacteria are grown on glucose, IDH is fully active and unphosphorylated, but when grown on acetate or ethanol, the activity of IDH declines drastically concomitant with its phosphorylation. This is Isocitrate dehydrogenase kinase/phosphatase from Pectobacterium atrosepticum (strain SCRI 1043 / ATCC BAA-672) (Erwinia carotovora subsp. atroseptica).